Consider the following 894-residue polypeptide: ABC-transporter-regulating transcription factor (894 aa).

Positions 71 to 98 (CDMCRKKKIKCDGKMPKCSHCINYRTDC) form a DNA-binding region, zn(2)-C6 fungal-type. The segment covering 159–174 (NTALNSLKSPTNKFNG) has biased composition (polar residues). Residues 159–219 (NTALNSLKSP…PKESETEVEG (61 aa)) are disordered. Residues 175-189 (SSATSQSQHTTASRH) show a composition bias toward low complexity. The segment covering 199 to 210 (SPHTAATSPNSP) has biased composition (polar residues). Residues 649–669 (CVWLILYYPVSALVTLFANIL) form a helical membrane-spanning segment. A disordered region spans residues 724-797 (AEKESHSKKK…MSNPTRAFAP (74 aa)). Basic and acidic residues predominate over residues 736 to 750 (AAPDEPQDLRQKTPD). Polar residues-rich tracts occupy residues 751-761 (ENSVPSPSTKR) and 771-792 (LFPS…SNPT).

Its subcellular location is the nucleus. It localises to the membrane. In terms of biological role, transcription factor that regulates expression of the genes related to resistance to azole compounds. This Aspergillus oryzae (strain ATCC 42149 / RIB 40) (Yellow koji mold) protein is ABC-transporter-regulating transcription factor.